A 243-amino-acid chain; its full sequence is Zwei Ig domain protein zig-6 (243 aa).

The signal sequence occupies residues 1–20 (MTKLCLLLLPLVFLVSYSFA). 2 consecutive Ig-like C2-type domains span residues 30-118 (PNAN…MDVI) and 133-212 (GQVL…KTVT). A disulfide bridge links cysteine 47 with cysteine 102. Asparagine 91 and asparagine 142 each carry an N-linked (GlcNAc...) asparagine glycan. Cysteine 145 and cysteine 196 form a disulfide bridge.

In terms of tissue distribution, expressed in head and tail body wall muscles.

Its subcellular location is the secreted. Probably not involved in maintaining the position of ASI and ASH head neuron cell bodies and ventral nerve cord axons of PVQ, PVP, RMEV, AVK and HSN neurons. This chain is Zwei Ig domain protein zig-6, found in Caenorhabditis elegans.